The chain runs to 309 residues: Aspartate carbamoyltransferase catalytic subunit (309 aa).

Residues R56 and T57 each coordinate carbamoyl phosphate. An L-aspartate-binding site is contributed by K84. Residues R106, H136, and Q139 each contribute to the carbamoyl phosphate site. Residues R169 and R221 each coordinate L-aspartate. Carbamoyl phosphate is bound by residues A264 and P265.

The protein belongs to the aspartate/ornithine carbamoyltransferase superfamily. ATCase family. As to quaternary structure, heterododecamer (2C3:3R2) of six catalytic PyrB chains organized as two trimers (C3), and six regulatory PyrI chains organized as three dimers (R2).

The enzyme catalyses carbamoyl phosphate + L-aspartate = N-carbamoyl-L-aspartate + phosphate + H(+). Its pathway is pyrimidine metabolism; UMP biosynthesis via de novo pathway; (S)-dihydroorotate from bicarbonate: step 2/3. Functionally, catalyzes the condensation of carbamoyl phosphate and aspartate to form carbamoyl aspartate and inorganic phosphate, the committed step in the de novo pyrimidine nucleotide biosynthesis pathway. In Limosilactobacillus reuteri subsp. reuteri (strain JCM 1112) (Lactobacillus reuteri), this protein is Aspartate carbamoyltransferase catalytic subunit.